The chain runs to 334 residues: Galactinol synthase 3 (334 aa).

Lys-97 is a catalytic residue. Mn(2+) contacts are provided by Asp-113, Asp-115, and His-251.

It belongs to the glycosyltransferase 8 family. Galactosyltransferase subfamily. A divalent metal cation is required as a cofactor.

The protein localises to the cytoplasm. The enzyme catalyses myo-inositol + UDP-alpha-D-galactose = alpha-D-galactosyl-(1-&gt;3)-1D-myo-inositol + UDP + H(+). Galactinol synthase involved in the biosynthesis of raffinose family oligosaccharides (RFOs) that function as osmoprotectants. May promote plant stress tolerance. This is Galactinol synthase 3 (GOLS3) from Arabidopsis thaliana (Mouse-ear cress).